The chain runs to 220 residues: Ribose-5-phosphate isomerase A (220 aa).

Residues 28–31, 81–84, and 94–97 each bind substrate; these read TGST, DGAD, and KGGG. The active-site Proton acceptor is E103. K121 contributes to the substrate binding site.

This sequence belongs to the ribose 5-phosphate isomerase family. Homodimer.

The enzyme catalyses aldehydo-D-ribose 5-phosphate = D-ribulose 5-phosphate. It functions in the pathway carbohydrate degradation; pentose phosphate pathway; D-ribose 5-phosphate from D-ribulose 5-phosphate (non-oxidative stage): step 1/1. Functionally, catalyzes the reversible conversion of ribose-5-phosphate to ribulose 5-phosphate. The protein is Ribose-5-phosphate isomerase A of Shewanella baltica (strain OS185).